The sequence spans 209 residues: Ribonuclease HII (209 aa).

The RNase H type-2 domain occupies 7–198 (GPVAGVDEAG…VAKAHQEWLH (192 aa)). D13, E14, and D107 together coordinate a divalent metal cation.

The protein belongs to the RNase HII family. Requires Mn(2+) as cofactor. The cofactor is Mg(2+).

Its subcellular location is the cytoplasm. The enzyme catalyses Endonucleolytic cleavage to 5'-phosphomonoester.. In terms of biological role, endonuclease that specifically degrades the RNA of RNA-DNA hybrids. The sequence is that of Ribonuclease HII from Corynebacterium glutamicum (strain ATCC 13032 / DSM 20300 / JCM 1318 / BCRC 11384 / CCUG 27702 / LMG 3730 / NBRC 12168 / NCIMB 10025 / NRRL B-2784 / 534).